The sequence spans 288 residues: Elongation factor Ts (288 aa).

The involved in Mg(2+) ion dislocation from EF-Tu stretch occupies residues 82–85 (TDFV).

The protein belongs to the EF-Ts family.

It is found in the cytoplasm. In terms of biological role, associates with the EF-Tu.GDP complex and induces the exchange of GDP to GTP. It remains bound to the aminoacyl-tRNA.EF-Tu.GTP complex up to the GTP hydrolysis stage on the ribosome. The chain is Elongation factor Ts from Chlorobium limicola (strain DSM 245 / NBRC 103803 / 6330).